A 115-amino-acid polypeptide reads, in one-letter code: Thionin-like protein 2 (115 aa).

The N-terminal stretch at 1 to 20 (MLVAVMIVMVIGNLLAQTAA) is a signal peptide.

This sequence belongs to the plant thionin (TC 1.C.44) family. In terms of processing, is disulfide-linked.

The protein resides in the secreted. May be involved in plant defense. The sequence is that of Thionin-like protein 2 from Arabidopsis thaliana (Mouse-ear cress).